The chain runs to 665 residues: Cyclic nucleotide-gated cation channel subunit A (665 aa).

Residues 1–110 (MRHFKVKAMV…DPTLQSHYRW (110 aa)) lie on the Cytoplasmic side of the membrane. The chain crosses the membrane as a helical span at residues 111–131 (LAIVSLAVLYNIIFVVGRAVF). The Extracellular segment spans residues 132–138 (WEINKSA). Asn135 carries an N-linked (GlcNAc...) asparagine glycan. Residues 139–159 (PAFWYTLDYLCDFIYLLDTLV) form a helical membrane-spanning segment. The Cytoplasmic segment spans residues 160 to 186 (HMHEGFLDQGLLVRDAFRLRRHYFHTK). Residues 187–207 (GWYLDVLSMLPTDLAYIWWPP) traverse the membrane as a helical segment. At 208-253 (ETCSSLYLPCPVIVRLNRLLRINRLWEWFDRTETATGYPNAFRICK) the chain is on the extracellular side. The chain crosses the membrane as a helical span at residues 254–274 (VVLAILVLIHWNACMYFAISY). Residues 275 to 325 (EIGFSSDSWVYNLNGTRNNTLQRQYIYSFYWSTLTLTTIGETPTPENDVEY) are Cytoplasmic-facing. A helical transmembrane segment spans residues 326–346 (LFVVADFLAGVLIFATIVGNI). Residues 347–481 (GSMISNMNVA…GKLSVVGDDG (135 aa)) are Extracellular-facing. 3',5'-cyclic GMP contacts are provided by residues 437-559 (LLEA…DGLL), Glu496, and Arg511. A helical membrane pass occupies residues 482-502 (ITVLATLGAGSVFGEVSVLEI). The Cytoplasmic portion of the chain corresponds to 503–665 (AGNRTGNRRT…SSDAAKQNTL (163 aa)). The segment at 633-665 (RSGRLYSLQPKRRPRSRPDATAKSSDAAKQNTL) is disordered. A compositionally biased stretch (polar residues) spans 654-665 (AKSSDAAKQNTL).

Belongs to the cyclic nucleotide-gated cation channel (TC 1.A.1.5) family. In terms of tissue distribution, expressed in antennae and the visual system.

Its subcellular location is the membrane. Functionally, approximately 50-fold more sensitive to cGMP than to cAMP. May be involved in transduction cascades of both invertebrate photoreceptors and olfactory sensillae. The polypeptide is Cyclic nucleotide-gated cation channel subunit A (CngA) (Drosophila melanogaster (Fruit fly)).